The primary structure comprises 283 residues: Elongation factor Ts (283 aa).

Residues 80 to 83 (TDFV) form an involved in Mg(2+) ion dislocation from EF-Tu region.

The protein belongs to the EF-Ts family.

The protein localises to the cytoplasm. Functionally, associates with the EF-Tu.GDP complex and induces the exchange of GDP to GTP. It remains bound to the aminoacyl-tRNA.EF-Tu.GTP complex up to the GTP hydrolysis stage on the ribosome. This is Elongation factor Ts from Pectobacterium carotovorum subsp. carotovorum (strain PC1).